Here is a 128-residue protein sequence, read N- to C-terminus: MALMAITKNVKYFSMLGIWFFTLIDIWFLAKMIDIFLSEDSKILLVAVSIKMKLVSISNFILELIGVAKCTLYVISPLMRSICVSISDTRSVNSFTLLIITVSPSLDNANVPSKSQMERFNCSSFRIK.

This is an uncharacterized protein from Vaccinia virus (strain Copenhagen) (VACV).